A 362-amino-acid chain; its full sequence is MAFDLKLTACLLLAVFSLAAAADCECQPSDEGHDAAKSRTLKVIAIFCILVGSSAGCAIPSLGRRFPALRPDTSLFFALKAFAAGVILATAFVHILPVSFDKLGSPCLVDGPWRKYPFTGLVAMLAAVATLLLDTIATGYFLQRAQDSRGAVAAVAACGGDASSSHDHERGNAHGVSSAVIASATMPNDAADDCDDAEDRAKLVRHRVISQVFELGIIVHSIIIGISLGASESPSTIRPLVAALTFHQFFEGIGLGGCIVQARFHLKSAVTMAIFFSLTTPVGIMIGIGISSAYNENSPTALIVEGILDAAAAGILNYMALVDLLAEDFMNPRVRKSGRLQLIISILLLVGIALMSLLGIWA.

The first 21 residues, Met-1 to Ala-21, serve as a signal peptide directing secretion. Residues Ala-22–Lys-42 are Extracellular-facing. The chain crosses the membrane as a helical span at residues Val-43–Gly-63. Residues Arg-64–Ser-74 lie on the Cytoplasmic side of the membrane. Residues Leu-75–Ile-95 traverse the membrane as a helical segment. Topologically, residues Leu-96–Gly-120 are extracellular. The helical transmembrane segment at Leu-121–Phe-141 threads the bilayer. The Cytoplasmic segment spans residues Leu-142–Arg-207. The helical transmembrane segment at Val-208–Leu-228 threads the bilayer. The Extracellular portion of the chain corresponds to Gly-229 to Pro-239. A helical transmembrane segment spans residues Leu-240–Val-260. Topologically, residues Gln-261–Ala-269 are cytoplasmic. A helical transmembrane segment spans residues Val-270 to Ile-290. At Ser-291 to Ala-301 the chain is on the extracellular side. The chain crosses the membrane as a helical span at residues Leu-302–Val-322. The Cytoplasmic segment spans residues Asp-323–Gln-341. A helical transmembrane segment spans residues Leu-342–Ala-362.

This sequence belongs to the ZIP transporter (TC 2.A.5) family.

Its subcellular location is the cell membrane. Functionally, zinc transporter that may be involved in zinc uptake from the rhizosphere. The protein is Zinc transporter 9 (ZIP9) of Oryza sativa subsp. japonica (Rice).